Consider the following 306-residue polypeptide: Recombination-associated protein RdgC (306 aa).

It belongs to the RdgC family.

Its subcellular location is the cytoplasm. The protein localises to the nucleoid. In terms of biological role, may be involved in recombination. The sequence is that of Recombination-associated protein RdgC from Pseudomonas fluorescens (strain Pf0-1).